Reading from the N-terminus, the 536-residue chain is Probable cytochrome P450 318a1 (536 aa).

The segment covering E439 to R457 has biased composition (basic and acidic residues). Positions E439–D460 are disordered. C477 serves as a coordination point for heme.

The protein belongs to the cytochrome P450 family. Requires heme as cofactor.

The protein resides in the endoplasmic reticulum membrane. It localises to the microsome membrane. Functionally, may be involved in the metabolism of insect hormones and in the breakdown of synthetic insecticides. The polypeptide is Probable cytochrome P450 318a1 (Cyp318a1) (Drosophila melanogaster (Fruit fly)).